Reading from the N-terminus, the 335-residue chain is Carboxylesterase 1 (335 aa).

The Involved in the stabilization of the negatively charged intermediate by the formation of the oxyanion hole signature appears at 90 to 92; it reads HGG. Paraoxon contacts are provided by residues 92–93, Ser-169, and Ala-170; that span reads GG. Ser-169 is an active-site residue. Catalysis depends on residues Asp-276 and His-306.

It belongs to the 'GDXG' lipolytic enzyme family.

The catalysed reaction is a carboxylic ester + H2O = an alcohol + a carboxylate + H(+). Is inhibited by the organophosphates paraoxon and dimethylchlorophosphate (DMCP). Functionally, carboxylesterase acting on esters with varying acyl chain length. The polypeptide is Carboxylesterase 1 (CXE1) (Actinidia eriantha (Velvet vine)).